The primary structure comprises 520 residues: GMP synthase [glutamine-hydrolyzing] (520 aa).

A Glutamine amidotransferase type-1 domain is found at 12–202 (KIIVLDFGSQ…AFDVCGCTGD (191 aa)). Residue Cys-89 is the Nucleophile of the active site. Catalysis depends on residues His-176 and Glu-178. Positions 203 to 395 (WSMENFIDME…LGMPDAIVWR (193 aa)) constitute a GMPS ATP-PPase domain. Residue 230–236 (SGGVDSS) coordinates ATP.

In terms of assembly, homodimer.

The catalysed reaction is XMP + L-glutamine + ATP + H2O = GMP + L-glutamate + AMP + diphosphate + 2 H(+). It participates in purine metabolism; GMP biosynthesis; GMP from XMP (L-Gln route): step 1/1. In terms of biological role, catalyzes the synthesis of GMP from XMP. This Enterococcus faecalis (strain ATCC 700802 / V583) protein is GMP synthase [glutamine-hydrolyzing].